A 508-amino-acid chain; its full sequence is MAALGSSSQNVTEYVVRVPKNTAKRYNIMAFNAADKVNFATWNQARLERDLSNKKIYQEEEMPESGAGSEFNRKLREEARRKKYGIVLKEFRPEDQPWLLRVNGKSGRKFKGIKKGGVTENTAYYIFTQCADGAFEAFPVQNWYNFTPLARHRTLTAEEAEEEWERRNKVLNHFSIMQQRRLKDQDQDEDEEEKEKRSRKKPSELRIHDLEDDLEMSSDASDASGEEGSRASKAKKKAPVTKAGRKKKKKKGSDDEAFEDSDDGDFEGQEVDYMSDGSSSSPDEAEGKPKVPQQEDGPKGVDEQSESSEESEEEKPPEEDKEEEEEKKAPTPQEKKRRKDSSDDSDSSEESDIDSETSSALFMAKKKTPPKRERKPSGGSSKGTSRPGTPSAEAASTSSTLRAAASKLEQGKRTSETPAAKRLRMDTGPQSLSGKSTPSSGDVQVTEDAVRRYLTRKPMTTKDLLKKFQTKKTGLSSEQTVNVLAQILKRLNPERKMIGDKMHFSLKE.

The residue at position 2 (Ala2) is an N-acetylalanine. Phosphothreonine is present on Thr156. The interval 177 to 448 is disordered; the sequence is MQQRRLKDQD…SSGDVQVTED (272 aa). Phosphoserine occurs at positions 217, 218, 221, and 224. Residues 232 to 251 show a composition bias toward basic residues; it reads SKAKKKAPVTKAGRKKKKKK. 2 stretches are compositionally biased toward acidic residues: residues 255–270 and 303–325; these read DEAF…EGQE and EQSE…EEEE. Thr331 is subject to Phosphothreonine. Acidic residues predominate over residues 343-355; it reads DDSDSSEESDIDS. Basic residues predominate over residues 364–374; it reads AKKKTPPKRER. Residues Ser377, Ser380, Ser381, and Ser385 each carry the phosphoserine modification. The segment covering 378-388 has biased composition (polar residues); the sequence is GGSSKGTSRPG. Residue Thr389 is modified to Phosphothreonine. The segment covering 389–406 has biased composition (low complexity); it reads TPSAEAASTSSTLRAAAS. At Ser391 the chain carries Phosphoserine. At Lys407 the chain carries N6-acetyllysine. Positions 428–443 are enriched in polar residues; it reads GPQSLSGKSTPSSGDV. Residues Ser431, Ser433, and Ser436 each carry the phosphoserine modification. Phosphothreonine is present on Thr437. A Phosphoserine modification is found at Ser440.

Belongs to the TFIIF alpha subunit family. Heterodimer of an alpha and a beta subunit. Interacts with GTF2F2, CTDP1, TAF6/TAFII80 and URI1. Interacts with GTF2B (via C-terminus and preferentially via acetylated form); this interaction prevents binding of GTF2B to GTF2F2. Part of TBP-based Pol II pre-initiation complex (PIC), in which Pol II core assembles with general transcription factors and other specific initiation factors including GTF2E1, GTF2E2, GTF2F1, GTF2F2, TCEA1, ERCC2, ERCC3, GTF2H2, GTF2H3, GTF2H4, GTF2H5, GTF2A1, GTF2A2, GTF2B and TBP; this large multi-subunit PIC complex mediates DNA unwinding and targets Pol II core to the transcription start site where the first phosphodiester bond forms. In terms of processing, phosphorylated on Ser and other residues by TAF1 and casein kinase II-like kinases.

The protein resides in the nucleus. Its function is as follows. TFIIF is a general transcription initiation factor that binds to RNA polymerase II and helps to recruit it to the initiation complex in collaboration with TFIIB. It promotes transcription elongation. The chain is General transcription factor IIF subunit 1 (Gtf2f1) from Rattus norvegicus (Rat).